Consider the following 210-residue polypeptide: MARKGILGKKVGMTQVFTDNGELVPVTVVDVTPNVVMQVKTVESDGYEAVQLGYGDMREVLTNKPSVGHAKKADTTPKRFVREIRDVALSDYEIGSEVKADEFAAGDIVDVTGTSKGHGYQGNIKKDGQSRGPMAHGSRYHRRPGSLGAIINKVFKGKKLPGRMGNHTRTMQNLQVVAADTEHNVLLIKGNVPGANKSFVTIRSAVKAAK.

A disordered region spans residues 119-143 (GYQGNIKKDGQSRGPMAHGSRYHRR).

This sequence belongs to the universal ribosomal protein uL3 family. As to quaternary structure, part of the 50S ribosomal subunit. Forms a cluster with proteins L14 and L19.

One of the primary rRNA binding proteins, it binds directly near the 3'-end of the 23S rRNA, where it nucleates assembly of the 50S subunit. The polypeptide is Large ribosomal subunit protein uL3 (Lacticaseibacillus casei (strain BL23) (Lactobacillus casei)).